A 110-amino-acid polypeptide reads, in one-letter code: uncharacterized protein (110 aa).

Residues 1 to 23 form the signal peptide; sequence MKRITINIITMFIAAAVISLTGT.

This is an uncharacterized protein from Bacillus subtilis (strain 168).